The chain runs to 298 residues: Lipoyl synthase (298 aa).

Residues C40, C45, C51, C67, C71, C74, and S280 each coordinate [4Fe-4S] cluster. In terms of domain architecture, Radical SAM core spans A53–S269.

This sequence belongs to the radical SAM superfamily. Lipoyl synthase family. The cofactor is [4Fe-4S] cluster.

The protein localises to the cytoplasm. It catalyses the reaction [[Fe-S] cluster scaffold protein carrying a second [4Fe-4S](2+) cluster] + N(6)-octanoyl-L-lysyl-[protein] + 2 oxidized [2Fe-2S]-[ferredoxin] + 2 S-adenosyl-L-methionine + 4 H(+) = [[Fe-S] cluster scaffold protein] + N(6)-[(R)-dihydrolipoyl]-L-lysyl-[protein] + 4 Fe(3+) + 2 hydrogen sulfide + 2 5'-deoxyadenosine + 2 L-methionine + 2 reduced [2Fe-2S]-[ferredoxin]. The protein operates within protein modification; protein lipoylation via endogenous pathway; protein N(6)-(lipoyl)lysine from octanoyl-[acyl-carrier-protein]. Functionally, catalyzes the radical-mediated insertion of two sulfur atoms into the C-6 and C-8 positions of the octanoyl moiety bound to the lipoyl domains of lipoate-dependent enzymes, thereby converting the octanoylated domains into lipoylated derivatives. The chain is Lipoyl synthase from Bacillus anthracis (strain A0248).